Reading from the N-terminus, the 330-residue chain is Dimethyladenosine transferase 1, mitochondrial (330 aa).

The N-terminal 84 residues, 1-84 (MAQPSARVLQ…RSILRRHPQR (84 aa)), are a transit peptide targeting the mitochondrion. Residues 38-41 (QNFL), Asn39, Leu41, Gly67, Glu89, Asp118, and Asn140 contribute to the S-adenosyl-L-methionine site.

The protein belongs to the class I-like SAM-binding methyltransferase superfamily. rRNA adenine N(6)-methyltransferase family. KsgA subfamily.

It localises to the mitochondrion. Its function is as follows. Probable S-adenosyl-L-methionine-dependent methyltransferase which specifically dimethylates mitochondrial 12S rRNA at the conserved stem loop. In contrast to mtTFB2, it does not have a critical role in either transcription or regulation of the copy number of mitochondrial DNA. This is Dimethyladenosine transferase 1, mitochondrial (mtTFB1) from Drosophila melanogaster (Fruit fly).